Here is a 399-residue protein sequence, read N- to C-terminus: Adenylate cyclase (399 aa).

Positions 1 to 10 (MTVGDTTSGS) are enriched in polar residues. Residues 1-35 (MTVGDTTSGSGEEPAADSSVHATPHHEVDHTVEPT) form a disordered region. Over residues 24–33 (PHHEVDHTVE) the composition is skewed to basic and acidic residues. Positions 198 to 307 (RVRFADLVGF…TTVNLASRLT (110 aa)) constitute a Guanylate cyclase domain. The Mg(2+) site is built by D203 and D247.

Belongs to the adenylyl cyclase class-3 family. The cofactor is Mg(2+).

It carries out the reaction ATP = 3',5'-cyclic AMP + diphosphate. This Streptomyces griseus protein is Adenylate cyclase (cya).